The primary structure comprises 72 residues: Large ribosomal subunit protein bL28 (72 aa).

The protein belongs to the bacterial ribosomal protein bL28 family.

The chain is Large ribosomal subunit protein bL28 from Chlorobium phaeobacteroides (strain BS1).